A 467-amino-acid polypeptide reads, in one-letter code: Cilia- and flagella-associated protein 97 (467 aa).

Disordered regions lie at residues 1-20 (MDRY…FFDS), 76-235 (IAKP…DISP), 336-370 (RQAA…KEQQ), and 412-467 (ALSP…AAWQ). Residues 124–135 (DNYYPDEEDSSE) show a composition bias toward acidic residues. Residues 162–177 (DFVSTISSSDTEYSDT) show a composition bias toward polar residues. Over residues 180-194 (DDGASKSSYQSSKGS) the composition is skewed to low complexity. Positions 198 to 216 (SPERKPSRSSMRELRHYAE) are enriched in basic and acidic residues. Polar residues predominate over residues 223–235 (TDVTPLSTPDISP). Residues 310–387 (KKNFSFSNDE…ALLKRLESVK (78 aa)) adopt a coiled-coil conformation. Low complexity predominate over residues 421 to 439 (SVSRLSPSVSSGGFSRMSS).

Belongs to the CFAP97 family.

The chain is Cilia- and flagella-associated protein 97 from Xenopus tropicalis (Western clawed frog).